The primary structure comprises 197 residues: Adenylate kinase (197 aa).

7–15 (ALPGSGKTT) lines the ATP pocket.

Belongs to the archaeal adenylate kinase family.

The protein resides in the cytoplasm. It carries out the reaction AMP + ATP = 2 ADP. In Pyrobaculum aerophilum (strain ATCC 51768 / DSM 7523 / JCM 9630 / CIP 104966 / NBRC 100827 / IM2), this protein is Adenylate kinase (adkA).